A 62-amino-acid chain; its full sequence is uncharacterized protein (62 aa).

Residues 17-62 are disordered; sequence YNNYNNNNNNNNNNNNNNNNNNNNNNNNNNNNNNNNNNNNNNKNNN.

This is an uncharacterized protein from Dictyostelium discoideum (Social amoeba).